Reading from the N-terminus, the 64-residue chain is DNA-binding protein 7a (64 aa).

It belongs to the 7 kDa DNA-binding/endoribonuclease P2 family. Monomer.

It localises to the cytoplasm. Its function is as follows. Can constrain negative DNA supercoils. May be involved in maintaining the integrity of the genome at high temperature. In Saccharolobus islandicus (strain L.D.8.5 / Lassen #2) (Sulfolobus islandicus), this protein is DNA-binding protein 7a.